Reading from the N-terminus, the 95-residue chain is Co-chaperonin GroES (95 aa).

The protein belongs to the GroES chaperonin family. In terms of assembly, heptamer of 7 subunits arranged in a ring. Interacts with the chaperonin GroEL.

It is found in the cytoplasm. Functionally, together with the chaperonin GroEL, plays an essential role in assisting protein folding. The GroEL-GroES system forms a nano-cage that allows encapsulation of the non-native substrate proteins and provides a physical environment optimized to promote and accelerate protein folding. GroES binds to the apical surface of the GroEL ring, thereby capping the opening of the GroEL channel. This is Co-chaperonin GroES from Alkalilimnicola ehrlichii (strain ATCC BAA-1101 / DSM 17681 / MLHE-1).